A 1355-amino-acid chain; its full sequence is DNA-directed RNA polymerase subunit beta' (1355 aa).

Residues Cys-219, Cys-293, Cys-300, and Cys-303 each contribute to the Zn(2+) site. Residues 1331 to 1355 (AEVEVDDEVDDDYEDDDEDDDDYED) form a disordered region.

It belongs to the RNA polymerase beta' chain family. RpoC2 subfamily. In terms of assembly, in cyanobacteria the RNAP catalytic core is composed of 2 alpha, 1 beta, 1 beta', 1 gamma and 1 omega subunit. When a sigma factor is associated with the core the holoenzyme is formed, which can initiate transcription. Zn(2+) serves as cofactor.

The enzyme catalyses RNA(n) + a ribonucleoside 5'-triphosphate = RNA(n+1) + diphosphate. Its function is as follows. DNA-dependent RNA polymerase catalyzes the transcription of DNA into RNA using the four ribonucleoside triphosphates as substrates. This is DNA-directed RNA polymerase subunit beta' from Trichormus variabilis (strain ATCC 29413 / PCC 7937) (Anabaena variabilis).